The chain runs to 72 residues: Translation initiation factor IF-1 (72 aa).

Positions 1-72 constitute an S1-like domain; the sequence is MAKEEMLEFP…TKGRINYRFK (72 aa).

It belongs to the IF-1 family. Component of the 30S ribosomal translation pre-initiation complex which assembles on the 30S ribosome in the order IF-2 and IF-3, IF-1 and N-formylmethionyl-tRNA(fMet); mRNA recruitment can occur at any time during PIC assembly.

Its subcellular location is the cytoplasm. Functionally, one of the essential components for the initiation of protein synthesis. Stabilizes the binding of IF-2 and IF-3 on the 30S subunit to which N-formylmethionyl-tRNA(fMet) subsequently binds. Helps modulate mRNA selection, yielding the 30S pre-initiation complex (PIC). Upon addition of the 50S ribosomal subunit IF-1, IF-2 and IF-3 are released leaving the mature 70S translation initiation complex. This is Translation initiation factor IF-1 from Paracoccus denitrificans (strain Pd 1222).